The primary structure comprises 476 residues: ATP synthase subunit beta (476 aa).

154–161 serves as a coordination point for ATP; sequence GGAGVGKT.

It belongs to the ATPase alpha/beta chains family. In terms of assembly, F-type ATPases have 2 components, CF(1) - the catalytic core - and CF(0) - the membrane proton channel. CF(1) has five subunits: alpha(3), beta(3), gamma(1), delta(1), epsilon(1). CF(0) has three main subunits: a(1), b(2) and c(9-12). The alpha and beta chains form an alternating ring which encloses part of the gamma chain. CF(1) is attached to CF(0) by a central stalk formed by the gamma and epsilon chains, while a peripheral stalk is formed by the delta and b chains.

The protein resides in the cell inner membrane. The catalysed reaction is ATP + H2O + 4 H(+)(in) = ADP + phosphate + 5 H(+)(out). Functionally, produces ATP from ADP in the presence of a proton gradient across the membrane. The catalytic sites are hosted primarily by the beta subunits. The chain is ATP synthase subunit beta from Afipia carboxidovorans (strain ATCC 49405 / DSM 1227 / KCTC 32145 / OM5) (Oligotropha carboxidovorans).